The following is a 637-amino-acid chain: Clathrin coat assembly protein AP180A (637 aa).

An ENTH domain is found at methionine 1–tyrosine 126. Residues threonine 555–methionine 637 are disordered. 2 stretches are compositionally biased toward low complexity: residues glutamine 560 to glutamine 579 and glutamine 600 to proline 622. Residues alanine 587–methionine 637 are clathrin-binding. A compositionally biased stretch (polar residues) spans valine 623–methionine 637.

Belongs to the AP180 family. Interacts with PAN1 and the clathrin heavy and light chains CHC1 and CLC1.

It localises to the bud. The protein localises to the bud neck. The protein resides in the cell membrane. Its subcellular location is the cytoplasm. Its function is as follows. Involved in endocytosis and clathrin cage assembly. The polypeptide is Clathrin coat assembly protein AP180A (YAP1801) (Saccharomyces cerevisiae (strain ATCC 204508 / S288c) (Baker's yeast)).